The following is a 264-amino-acid chain: Phosphonoacetaldehyde hydrolase (264 aa).

The Nucleophile role is filled by D9. Mg(2+) is bound by residues D9 and A11. The active-site Schiff-base intermediate with substrate is K50. D183 provides a ligand contact to Mg(2+).

It belongs to the HAD-like hydrolase superfamily. PhnX family. Homodimer. It depends on Mg(2+) as a cofactor.

It carries out the reaction phosphonoacetaldehyde + H2O = acetaldehyde + phosphate + H(+). In terms of biological role, involved in phosphonate degradation. This Bacillus cereus (strain ATCC 14579 / DSM 31 / CCUG 7414 / JCM 2152 / NBRC 15305 / NCIMB 9373 / NCTC 2599 / NRRL B-3711) protein is Phosphonoacetaldehyde hydrolase.